We begin with the raw amino-acid sequence, 192 residues long: Fe/S biogenesis protein NfuA (192 aa).

Positions 149 and 152 each coordinate [4Fe-4S] cluster.

This sequence belongs to the NfuA family. In terms of assembly, homodimer. The cofactor is [4Fe-4S] cluster.

In terms of biological role, involved in iron-sulfur cluster biogenesis. Binds a 4Fe-4S cluster, can transfer this cluster to apoproteins, and thereby intervenes in the maturation of Fe/S proteins. Could also act as a scaffold/chaperone for damaged Fe/S proteins. The polypeptide is Fe/S biogenesis protein NfuA (Aeromonas hydrophila subsp. hydrophila (strain ATCC 7966 / DSM 30187 / BCRC 13018 / CCUG 14551 / JCM 1027 / KCTC 2358 / NCIMB 9240 / NCTC 8049)).